Reading from the N-terminus, the 227-residue chain is Phosphoribosylformylglycinamidine synthase subunit PurQ (227 aa).

The 223-residue stretch at 3–225 folds into the Glutamine amidotransferase type-1 domain; it reads FAVIVFPGSN…LKQWRETYVV (223 aa). The active-site Nucleophile is the Cys-86. Active-site residues include His-194 and Glu-196.

As to quaternary structure, part of the FGAM synthase complex composed of 1 PurL, 1 PurQ and 2 PurS subunits.

The protein resides in the cytoplasm. The enzyme catalyses N(2)-formyl-N(1)-(5-phospho-beta-D-ribosyl)glycinamide + L-glutamine + ATP + H2O = 2-formamido-N(1)-(5-O-phospho-beta-D-ribosyl)acetamidine + L-glutamate + ADP + phosphate + H(+). It catalyses the reaction L-glutamine + H2O = L-glutamate + NH4(+). The protein operates within purine metabolism; IMP biosynthesis via de novo pathway; 5-amino-1-(5-phospho-D-ribosyl)imidazole from N(2)-formyl-N(1)-(5-phospho-D-ribosyl)glycinamide: step 1/2. Functionally, part of the phosphoribosylformylglycinamidine synthase complex involved in the purines biosynthetic pathway. Catalyzes the ATP-dependent conversion of formylglycinamide ribonucleotide (FGAR) and glutamine to yield formylglycinamidine ribonucleotide (FGAM) and glutamate. The FGAM synthase complex is composed of three subunits. PurQ produces an ammonia molecule by converting glutamine to glutamate. PurL transfers the ammonia molecule to FGAR to form FGAM in an ATP-dependent manner. PurS interacts with PurQ and PurL and is thought to assist in the transfer of the ammonia molecule from PurQ to PurL. The chain is Phosphoribosylformylglycinamidine synthase subunit PurQ from Bacillus anthracis (strain A0248).